The primary structure comprises 197 residues: HTH-type transcriptional regulator BetI (197 aa).

Residues 8 to 68 (PIRRSQLIHA…ATMRHLLSAL (61 aa)) form the HTH tetR-type domain. Residues 31–50 (SIALIARLAGVSNGIISHYF) constitute a DNA-binding region (H-T-H motif).

It functions in the pathway amine and polyamine biosynthesis; betaine biosynthesis via choline pathway [regulation]. Repressor involved in the biosynthesis of the osmoprotectant glycine betaine. It represses transcription of the choline transporter BetT and the genes of BetAB involved in the synthesis of glycine betaine. This is HTH-type transcriptional regulator BetI from Pseudomonas aeruginosa (strain LESB58).